Here is a 497-residue protein sequence, read N- to C-terminus: Cytochrome P450 26A1 (497 aa).

Position 442 (Cys-442) interacts with heme.

This sequence belongs to the cytochrome P450 family. It depends on heme as a cofactor. Expressed in most fetal and adult tissues with highest levels in adult liver, heart, pituitary gland, adrenal gland, placenta and regions of the brain. Expressed at high levels in lung, pancreas, skin and uterus (at protein level). Lower expression level is detected in spleen, kidney, intestine and adipose tissue (at protein level).

It is found in the endoplasmic reticulum membrane. Its subcellular location is the microsome membrane. The enzyme catalyses all-trans-retinoate + reduced [NADPH--hemoprotein reductase] + O2 = all-trans-(4S)-hydroxyretinoate + oxidized [NADPH--hemoprotein reductase] + H2O + H(+). It catalyses the reaction all-trans-(4S)-hydroxyretinoate + reduced [NADPH--hemoprotein reductase] + O2 = all-trans-(4S,16)-dihydroxyretinoate + oxidized [NADPH--hemoprotein reductase] + H2O + H(+). The catalysed reaction is all-trans-retinoate + reduced [NADPH--hemoprotein reductase] + O2 = all-trans-18-hydroxyretinoate + oxidized [NADPH--hemoprotein reductase] + H2O + H(+). Its function is as follows. A cytochrome P450 monooxygenase involved in the metabolism of retinoates (RAs), the active metabolites of vitamin A, and critical signaling molecules in animals. RAs exist as at least four different isomers: all-trans-RA (atRA), 9-cis-RA, 13-cis-RA, and 9,13-dicis-RA, where atRA is considered to be the biologically active isomer, although 9-cis-RA and 13-cis-RA also have activity. Catalyzes the hydroxylation of atRA primarily at C-4 and C-18, thereby contributing to the regulation of atRA homeostasis and signaling. Hydroxylation of atRA limits its biological activity and initiates a degradative process leading to its eventual elimination. Involved in the convertion of atRA to all-trans-4-oxo-RA. Able to metabolize other RAs such as 9-cis, 13-cis and 9,13-di-cis RA. Can oxidize all-trans-13,14-dihydroretinoate (DRA) to metabolites which could include all-trans-4-oxo-DRA, all-trans-4-hydroxy-DRA, all-trans-5,8-epoxy-DRA, and all-trans-18-hydroxy-DRA. May play a role in the oxidative metabolism of xenobiotics such as tazarotenic acid. In Homo sapiens (Human), this protein is Cytochrome P450 26A1.